A 421-amino-acid polypeptide reads, in one-letter code: Divalent metal cation transporter MntH (421 aa).

11 consecutive transmembrane segments (helical) span residues 27–47, 51–71, 100–120, 128–148, 160–180, 201–221, 248–268, 289–309, 337–357, 358–378, and 396–416; these read LGPAFIVSVAYVDPGNFATNI, SLFDYHLIWVILWSNVIAIFL, WFLWITAELAAMATDLAEFLG, LFHIPMTYAAFLTGVVTFAIV, GIIFGLVAVISLAYAFELFIA, AMLIAVGILGATVMPHVIYLH, ILVAMNTAFIINAAMLIVSAA, PLLGVFSSWAFGIALLASGFS, LVTMVPAITIIALGIDPLKSL, IVSQVVLSFELPMAIIPLLLI, and IMGVLVASFVMILNGLLLYLT.

It belongs to the NRAMP family.

The protein localises to the cell membrane. Its function is as follows. H(+)-stimulated, divalent metal cation uptake system. This Caldanaerobacter subterraneus subsp. tengcongensis (strain DSM 15242 / JCM 11007 / NBRC 100824 / MB4) (Thermoanaerobacter tengcongensis) protein is Divalent metal cation transporter MntH.